A 142-amino-acid chain; its full sequence is Putative FK506-binding protein 9-like protein (142 aa).

The 49-residue stretch at 1 to 49 (MDMGLREMCVGEKRTVIIPPHLGYGEAGVDGEVPGSAVLVFDIELLELV) folds into the PPIase FKBP-type domain. EF-hand domains follow at residues 60-95 (WNGE…QVAS) and 105-140 (DAEL…AKQD). 5 residues coordinate Ca(2+): Asp-118, Asn-120, Asp-122, Lys-124, and Glu-129.

This is Putative FK506-binding protein 9-like protein (FKBP9P1) from Homo sapiens (Human).